Here is a 365-residue protein sequence, read N- to C-terminus: Phospho-N-acetylmuramoyl-pentapeptide-transferase (365 aa).

Transmembrane regions (helical) follow at residues 15–35 (PSGTQLLGLLSVLLVGLAVLI), 51–71 (VPVLVSAIVAGIFGMWIVPLL), 96–116 (TMGGLIFLPVGLAAGVIFAGF), 121–141 (IAVALVTLAYGVIGWVDDWQV), 156–176 (LILQIAIAVVFCIWLALTAPE), 180–200 (ITFFAGLSLPLGVFFWALAGF), 217–237 (GLAGGTGAIAFLGVGALALPA), 238–258 (HPGLSLLCACLSGACLGFIYH), 279–299 (LAAAGILSGNIWGLLIISGIF), and 344–364 (TQIVGAFYLINLGLVLLSFIL).

The protein belongs to the glycosyltransferase 4 family. MraY subfamily. Requires Mg(2+) as cofactor.

The protein localises to the cell inner membrane. It catalyses the reaction UDP-N-acetyl-alpha-D-muramoyl-L-alanyl-gamma-D-glutamyl-meso-2,6-diaminopimeloyl-D-alanyl-D-alanine + di-trans,octa-cis-undecaprenyl phosphate = di-trans,octa-cis-undecaprenyl diphospho-N-acetyl-alpha-D-muramoyl-L-alanyl-D-glutamyl-meso-2,6-diaminopimeloyl-D-alanyl-D-alanine + UMP. It participates in cell wall biogenesis; peptidoglycan biosynthesis. In terms of biological role, catalyzes the initial step of the lipid cycle reactions in the biosynthesis of the cell wall peptidoglycan: transfers peptidoglycan precursor phospho-MurNAc-pentapeptide from UDP-MurNAc-pentapeptide onto the lipid carrier undecaprenyl phosphate, yielding undecaprenyl-pyrophosphoryl-MurNAc-pentapeptide, known as lipid I. This Picosynechococcus sp. (strain ATCC 27264 / PCC 7002 / PR-6) (Agmenellum quadruplicatum) protein is Phospho-N-acetylmuramoyl-pentapeptide-transferase.